Here is an 85-residue protein sequence, read N- to C-terminus: Small ribosomal subunit protein uS17 (85 aa).

Belongs to the universal ribosomal protein uS17 family. In terms of assembly, part of the 30S ribosomal subunit.

One of the primary rRNA binding proteins, it binds specifically to the 5'-end of 16S ribosomal RNA. The polypeptide is Small ribosomal subunit protein uS17 (Geobacter sulfurreducens (strain ATCC 51573 / DSM 12127 / PCA)).